Here is a 75-residue protein sequence, read N- to C-terminus: DNA-directed RNA polymerase subunit omega (75 aa).

It belongs to the RNA polymerase subunit omega family. The RNAP catalytic core consists of 2 alpha, 1 beta, 1 beta' and 1 omega subunit. When a sigma factor is associated with the core the holoenzyme is formed, which can initiate transcription.

It catalyses the reaction RNA(n) + a ribonucleoside 5'-triphosphate = RNA(n+1) + diphosphate. Its function is as follows. Promotes RNA polymerase assembly. Latches the N- and C-terminal regions of the beta' subunit thereby facilitating its interaction with the beta and alpha subunits. The sequence is that of DNA-directed RNA polymerase subunit omega from Thermosipho melanesiensis (strain DSM 12029 / CIP 104789 / BI429).